The sequence spans 82 residues: Small ribosomal subunit protein bS16 (82 aa).

This sequence belongs to the bacterial ribosomal protein bS16 family.

This chain is Small ribosomal subunit protein bS16, found in Bdellovibrio bacteriovorus (strain ATCC 15356 / DSM 50701 / NCIMB 9529 / HD100).